Consider the following 264-residue polypeptide: DNA repair protein RecO (264 aa).

This sequence belongs to the RecO family.

Involved in DNA repair and RecF pathway recombination. This Chlorobium luteolum (strain DSM 273 / BCRC 81028 / 2530) (Pelodictyon luteolum) protein is DNA repair protein RecO.